Consider the following 393-residue polypeptide: S-adenosylmethionine synthase 2 (393 aa).

Residue E9 participates in Mg(2+) binding. H15 contributes to the ATP binding site. Residue E43 participates in K(+) binding. E56 and Q99 together coordinate L-methionine. ATP-binding positions include 167-169, 235-238, D246, 252-253, A269, K273, and K277; these read DGK, SGRF, and RK. D246 provides a ligand contact to L-methionine. K277 is an L-methionine binding site.

Belongs to the AdoMet synthase family. In terms of assembly, homotetramer. The cofactor is Mn(2+). Mg(2+) is required as a cofactor. Requires Co(2+) as cofactor. K(+) serves as cofactor. In terms of tissue distribution, roots and shoots.

The protein localises to the cytoplasm. It carries out the reaction L-methionine + ATP + H2O = S-adenosyl-L-methionine + phosphate + diphosphate. The protein operates within amino-acid biosynthesis; S-adenosyl-L-methionine biosynthesis; S-adenosyl-L-methionine from L-methionine: step 1/1. In terms of biological role, catalyzes the formation of S-adenosylmethionine from methionine and ATP. The reaction comprises two steps that are both catalyzed by the same enzyme: formation of S-adenosylmethionine (AdoMet) and triphosphate, and subsequent hydrolysis of the triphosphate. This chain is S-adenosylmethionine synthase 2 (SAMS2), found in Pinus contorta (Shore pine).